Here is a 292-residue protein sequence, read N- to C-terminus: Protein-L-isoaspartate O-methyltransferase (292 aa).

Residues Met1–Ala76 are disordered. Positions Asn28–Gln48 are enriched in polar residues. Ser138 is an active-site residue.

Belongs to the methyltransferase superfamily. L-isoaspartyl/D-aspartyl protein methyltransferase family.

Its subcellular location is the cytoplasm. The enzyme catalyses [protein]-L-isoaspartate + S-adenosyl-L-methionine = [protein]-L-isoaspartate alpha-methyl ester + S-adenosyl-L-homocysteine. Catalyzes the methyl esterification of L-isoaspartyl residues in peptides and proteins that result from spontaneous decomposition of normal L-aspartyl and L-asparaginyl residues. It plays a role in the repair and/or degradation of damaged proteins. In Janthinobacterium sp. (strain Marseille) (Minibacterium massiliensis), this protein is Protein-L-isoaspartate O-methyltransferase.